A 254-amino-acid chain; its full sequence is Imidazole glycerol phosphate synthase subunit HisF (254 aa).

Residues D11 and D130 contribute to the active site.

The protein belongs to the HisA/HisF family. As to quaternary structure, heterodimer of HisH and HisF.

It is found in the cytoplasm. It catalyses the reaction 5-[(5-phospho-1-deoxy-D-ribulos-1-ylimino)methylamino]-1-(5-phospho-beta-D-ribosyl)imidazole-4-carboxamide + L-glutamine = D-erythro-1-(imidazol-4-yl)glycerol 3-phosphate + 5-amino-1-(5-phospho-beta-D-ribosyl)imidazole-4-carboxamide + L-glutamate + H(+). The protein operates within amino-acid biosynthesis; L-histidine biosynthesis; L-histidine from 5-phospho-alpha-D-ribose 1-diphosphate: step 5/9. In terms of biological role, IGPS catalyzes the conversion of PRFAR and glutamine to IGP, AICAR and glutamate. The HisF subunit catalyzes the cyclization activity that produces IGP and AICAR from PRFAR using the ammonia provided by the HisH subunit. The protein is Imidazole glycerol phosphate synthase subunit HisF of Solibacter usitatus (strain Ellin6076).